The chain runs to 356 residues: tRNA N6-adenosine threonylcarbamoyltransferase (356 aa).

The a divalent metal cation site is built by His-124, His-128, and Tyr-145. Substrate-binding positions include 145–149 (YVSGG), Asp-177, Gly-192, Glu-196, and Asn-287. Asp-315 serves as a coordination point for a divalent metal cation.

Belongs to the KAE1 / TsaD family. In terms of assembly, component of the EKC/KEOPS complex composed of at least BUD32, CGI121, GON7, KAE1 and PCC1; the whole complex dimerizes. The cofactor is a divalent metal cation.

It is found in the cytoplasm. The protein resides in the nucleus. It carries out the reaction L-threonylcarbamoyladenylate + adenosine(37) in tRNA = N(6)-L-threonylcarbamoyladenosine(37) in tRNA + AMP + H(+). Its function is as follows. Component of the EKC/KEOPS complex that is required for the formation of a threonylcarbamoyl group on adenosine at position 37 (t(6)A37) in tRNAs that read codons beginning with adenine. The complex is probably involved in the transfer of the threonylcarbamoyl moiety of threonylcarbamoyl-AMP (TC-AMP) to the N6 group of A37. KAE1 likely plays a direct catalytic role in this reaction, but requires other protein(s) of the complex to fulfill this activity. The EKC/KEOPS complex also promotes both telomere uncapping and telomere elongation. The complex is required for efficient recruitment of transcriptional coactivators. This Yarrowia lipolytica (strain CLIB 122 / E 150) (Yeast) protein is tRNA N6-adenosine threonylcarbamoyltransferase.